The chain runs to 396 residues: Gap junction gamma-1 protein (396 aa).

Over 1–22 the chain is Cytoplasmic; it reads MSWSFLTRLLEEIHNHSTFVGK. A helical transmembrane segment spans residues 23–45; it reads IWLTVLIVFRIVLTAVGGESIYY. The Extracellular segment spans residues 46 to 75; the sequence is DEQSKFVCNTEQPGCENVCYDAFAPLSHVR. A helical transmembrane segment spans residues 76–95; that stretch reads FWVFQIILVATPSVMYLGYA. Residues 96–175 lie on the Cytoplasmic side of the membrane; the sequence is IHKIAKMEHG…RRIREDGLMK (80 aa). The interval 145-165 is disordered; it reads ELESDKENKEQSQPKPKHDGR. The span at 147-156 shows a compositional bias: basic and acidic residues; sequence ESDKENKEQS. The helical transmembrane segment at 176–198 threads the bilayer; sequence IYVLQLLARTVFEVGFLIGQYFL. At 199-228 the chain is on the extracellular side; sequence YGFQVHPFYVCSRLPCPHKIDCFISRPTEK. The chain crosses the membrane as a helical span at residues 229 to 248; sequence TIFLLIMYGVTGLCLLLNIW. Over 249 to 396 the chain is Cytoplasmic; sequence EMLHLGFGTI…SGDGKTSVWI (148 aa). Residues 353 to 396 are disordered; that stretch reads VQAYSHQNNPHGPREKKAKVGSKAGSNKSTASSKSGDGKTSVWI. A compositionally biased stretch (polar residues) spans 376-387; sequence AGSNKSTASSKS.

The protein belongs to the connexin family. Gamma-type subfamily. In terms of assembly, a connexon is composed of a hexamer of connexins. Interacts with CNST.

The protein localises to the cell membrane. It localises to the cell junction. The protein resides in the gap junction. Its function is as follows. One gap junction consists of a cluster of closely packed pairs of transmembrane channels, the connexons, through which materials of low MW diffuse from one cell to a neighboring cell. The polypeptide is Gap junction gamma-1 protein (GJC1) (Homo sapiens (Human)).